The sequence spans 119 residues: Aspartate 1-decarboxylase (119 aa).

Residue Ser-25 is the Schiff-base intermediate with substrate; via pyruvic acid of the active site. Ser-25 carries the post-translational modification Pyruvic acid (Ser). Residue Thr-57 participates in substrate binding. Tyr-58 functions as the Proton donor in the catalytic mechanism. 73-75 (GAA) lines the substrate pocket.

It belongs to the PanD family. As to quaternary structure, heterooctamer of four alpha and four beta subunits. It depends on pyruvate as a cofactor. In terms of processing, is synthesized initially as an inactive proenzyme, which is activated by self-cleavage at a specific serine bond to produce a beta-subunit with a hydroxyl group at its C-terminus and an alpha-subunit with a pyruvoyl group at its N-terminus.

It is found in the cytoplasm. The catalysed reaction is L-aspartate + H(+) = beta-alanine + CO2. It participates in cofactor biosynthesis; (R)-pantothenate biosynthesis; beta-alanine from L-aspartate: step 1/1. In terms of biological role, catalyzes the pyruvoyl-dependent decarboxylation of aspartate to produce beta-alanine. This chain is Aspartate 1-decarboxylase, found in Herminiimonas arsenicoxydans.